The primary structure comprises 375 residues: Acetylornithine aminotransferase (375 aa).

Pyridoxal 5'-phosphate contacts are provided by residues 93-94 (GT) and Phe120. Arg123 is a N(2)-acetyl-L-ornithine binding site. Pyridoxal 5'-phosphate is bound at residue 205-208 (DEVQ). An N6-(pyridoxal phosphate)lysine modification is found at Lys234. Residue Thr262 participates in N(2)-acetyl-L-ornithine binding. Thr263 lines the pyridoxal 5'-phosphate pocket.

It belongs to the class-III pyridoxal-phosphate-dependent aminotransferase family. ArgD subfamily. In terms of assembly, homodimer. Pyridoxal 5'-phosphate serves as cofactor.

It is found in the cytoplasm. The catalysed reaction is N(2)-acetyl-L-ornithine + 2-oxoglutarate = N-acetyl-L-glutamate 5-semialdehyde + L-glutamate. It participates in amino-acid biosynthesis; L-arginine biosynthesis; N(2)-acetyl-L-ornithine from L-glutamate: step 4/4. This Staphylococcus epidermidis (strain ATCC 12228 / FDA PCI 1200) protein is Acetylornithine aminotransferase.